The following is a 331-amino-acid chain: PDZ and LIM domain protein 4 (331 aa).

Residues 1–84 enclose the PDZ domain; it reads MPHSVTLRGP…HLTLSVSRPE (84 aa). Disordered stretches follow at residues 80–99, 105–152, and 221–243; these read VSRP…KAQA, DSEA…GSNS, and AGEG…ASKL. Phosphoserine is present on residues Ser-112, Ser-116, Ser-120, and Ser-135. The 60-residue stretch at 254-313 folds into the LIM zinc-binding domain; that stretch reads PECTRCGHGIVGTIVKARDKLYHPECFMCSDCGLNLKQRGYFFLDERLYCESHAKARVKP.

As to quaternary structure, homodimer. Interacts (via C-terminus only or via combined C-terminus and LIM domain, but not LIM domain only) with PTPN13 (via the second or fourth PDZ domains). Found in a complex with PTPN13 and TRIP6. Interacts (via PDZ domain) with ACTN1 and ACTN2 (via C-terminal SDL residues). Interacts (via PDZ domain) with TRIP6 (via the second LIM domain or via the third LIM domain plus C-terminus). Interacts (via LIM domain) with GRIA1 (via C-terminus); this interaction as well as the interaction with alpha-actinin is required for their colocalization in early endosomes. Interacts with PDLIM1. Forms (via LIM domain) a heterodimer with PDLIM3. Interacts directly with SRC (via kinase domain and to a lesser extent the SH2 domain). Phosphorylated on tyrosine residue(s). Can be dephosphorylated by PTPN13.

The protein localises to the cytoplasm. The protein resides in the cytoskeleton. Its subcellular location is the cell projection. It is found in the dendritic spine. It localises to the early endosome membrane. The protein localises to the recycling endosome membrane. The protein resides in the nucleus. Its subcellular location is the perinuclear region. It is found in the lamellipodium. It localises to the synapse. The protein localises to the synaptosome. Functionally, suppresses SRC activation by recognizing and binding to active SRC and facilitating PTPN13-mediated dephosphorylation of SRC 'Tyr-419' leading to its inactivation. Inactivated SRC dissociates from this protein allowing the initiation of a new SRC inactivation cycle. Involved in reorganization of the actin cytoskeleton. In nonmuscle cells, binds to ACTN1 (alpha-actinin-1), increases the affinity of ACTN1 to F-actin (filamentous actin), and promotes formation of actin stress fibers. Involved in regulation of the synaptic AMPA receptor transport in dendritic spines of hippocampal pyramidal neurons directing the receptors toward an insertion at the postsynaptic membrane. Links endosomal surface-internalized GRIA1-containing AMPA receptors to the alpha-actinin/actin cytoskeleton. Increases AMPA receptor-mediated excitatory postsynaptic currents in neurons. This chain is PDZ and LIM domain protein 4 (PDLIM4), found in Bos taurus (Bovine).